Consider the following 120-residue polypeptide: Transcription elongation factor SPT4 (120 aa).

The segment at 1-39 (MAASIPSDLRNLRACLLCSLIKSVDAFQTDGCENCDEVL) is interaction with spt-5. Residues 15–35 (CLLCSLIKSVDAFQTDGCENC) form a C4-type zinc finger.

This sequence belongs to the SPT4 family. In terms of assembly, interacts with spt-5 to form DSIF. DSIF interacts with RNA polymerase II and with the positive transcription elongation factor b complex (P-TEFb complex), which is composed of cdk-9 and cyclin-T.

The protein resides in the nucleus. In terms of biological role, may function as a component of the DRB sensitivity-inducing factor complex (DSIF complex), which regulates transcription elongation by RNA polymerase II. DSIF may enhance transcriptional pausing at sites proximal to the promoter, which may in turn facilitate the assembly of an elongation competent RNA polymerase II complex. This chain is Transcription elongation factor SPT4 (spt-4), found in Caenorhabditis briggsae.